The chain runs to 103 residues: Large ribosomal subunit protein bL21 (103 aa).

This sequence belongs to the bacterial ribosomal protein bL21 family. Part of the 50S ribosomal subunit. Contacts protein L20.

Its function is as follows. This protein binds to 23S rRNA in the presence of protein L20. This chain is Large ribosomal subunit protein bL21, found in Sodalis glossinidius (strain morsitans).